The primary structure comprises 149 residues: Large ribosomal subunit protein bL9 (149 aa).

It belongs to the bacterial ribosomal protein bL9 family.

Functionally, binds to the 23S rRNA. The sequence is that of Large ribosomal subunit protein bL9 from Glaesserella parasuis serovar 5 (strain SH0165) (Haemophilus parasuis).